Reading from the N-terminus, the 91-residue chain is Small ribosomal subunit protein bS18 (91 aa).

Residues 1 to 21 form a disordered region; the sequence is MSDERTPQRSSGPRKKRPFQR. The span at 12-21 shows a compositional bias: basic residues; it reads GPRKKRPFQR.

The protein belongs to the bacterial ribosomal protein bS18 family. Part of the 30S ribosomal subunit. Forms a tight heterodimer with protein bS6.

Binds as a heterodimer with protein bS6 to the central domain of the 16S rRNA, where it helps stabilize the platform of the 30S subunit. The polypeptide is Small ribosomal subunit protein bS18 (Geotalea uraniireducens (strain Rf4) (Geobacter uraniireducens)).